We begin with the raw amino-acid sequence, 249 residues long: Cobalt transport protein CbiM (249 aa).

The signal sequence occupies residues 1-27; that stretch reads MKPLHRWLPVVIGAALLIIFESRAAYA. Transmembrane regions (helical) follow at residues 33–53, 70–90, 102–122, 134–154, 161–181, and 207–227; these read GFLP…FWVL, LLLG…IPSV, LGTI…VLLF, TLGA…WLIW, APIW…TYVV, and IFAV…VLIF.

It belongs to the CbiM family. As to quaternary structure, forms an energy-coupling factor (ECF) transporter complex composed of an ATP-binding protein (A component, CbiO), a transmembrane protein (T component, CbiQ) and 2 possible substrate-capture proteins (S components, CbiM and CbiN) of unknown stoichimetry.

The protein localises to the cell membrane. It functions in the pathway cofactor biosynthesis; adenosylcobalamin biosynthesis. Functionally, part of the energy-coupling factor (ECF) transporter complex CbiMNOQ involved in cobalt import. This chain is Cobalt transport protein CbiM, found in Roseiflexus sp. (strain RS-1).